Consider the following 643-residue polypeptide: Protein ecdysoneless homolog (643 aa).

Disordered regions lie at residues 428 to 458 (EFYN…NNFD) and 501 to 600 (IESM…FTPV). Residues 446–456 (AGSSSDANMNN) are compositionally biased toward polar residues. The span at 528 to 543 (MDFDDVEDDSEGEESN) shows a compositional bias: acidic residues. Over residues 564-580 (NSTLEKSFENVNQQHSS) the composition is skewed to polar residues. Basic and acidic residues predominate over residues 581 to 592 (KQNEESSKTRDE).

It belongs to the ECD family.

The sequence is that of Protein ecdysoneless homolog from Arabidopsis thaliana (Mouse-ear cress).